The chain runs to 389 residues: Na(+)/H(+) antiporter NhaA (389 aa).

The next 11 helical transmembrane spans lie at 17–37, 59–79, 95–115, 124–144, 154–174, 177–197, 213–233, 261–281, 287–307, 328–348, and 363–383; these read ILLLVAVALAMLMANSPLAGL, LLLWINDGLMALFFLLIGLEV, SLPTFAAIGGMLVPAGIYLLF, AGWAIPAATDIAFALGIMALL, VFLLALAIIDDLGVIVIIALF, TDLSTISLIIASIAIVGLVAL, LVLWVAVLKSGVHATLAGVII, FLILPVFAFANAGVALGNMSL, PVPVGIALGLMLGKPIGVMLF, IAPVAAMCGIGFTMSMFIASL, and LGTLIGSIIAALIGYFWLSKV.

It belongs to the NhaA Na(+)/H(+) (TC 2.A.33) antiporter family.

The protein resides in the cell inner membrane. It catalyses the reaction Na(+)(in) + 2 H(+)(out) = Na(+)(out) + 2 H(+)(in). In terms of biological role, na(+)/H(+) antiporter that extrudes sodium in exchange for external protons. The sequence is that of Na(+)/H(+) antiporter NhaA from Shewanella sp. (strain MR-7).